A 216-amino-acid chain; its full sequence is Lipoprotein signal peptidase (216 aa).

Residues 1–21 (MATSRTAPTRAPSLRSSPALE) form a disordered region. The next 3 membrane-spanning stretches (helical) occupy residues 31–51 (VGALVILAVVALCVYLMDQIT), 89–109 (GSTWIFSLVGVGVLGFVIWYA), and 114–134 (STAWAILFGLLLGGLLGNLTD). Residues D149 and D164 contribute to the active site. A helical membrane pass occupies residues 159–179 (IFNLADVAIVFSMGLFLLLTL). The tract at residues 189–216 (QRDEGAGVSSASPAGDESAADKPENLSA) is disordered. A compositionally biased stretch (basic and acidic residues) spans 207–216 (AADKPENLSA).

Belongs to the peptidase A8 family.

The protein localises to the cell membrane. The enzyme catalyses Release of signal peptides from bacterial membrane prolipoproteins. Hydrolyzes -Xaa-Yaa-Zaa-|-(S,diacylglyceryl)Cys-, in which Xaa is hydrophobic (preferably Leu), and Yaa (Ala or Ser) and Zaa (Gly or Ala) have small, neutral side chains.. It functions in the pathway protein modification; lipoprotein biosynthesis (signal peptide cleavage). This protein specifically catalyzes the removal of signal peptides from prolipoproteins. This is Lipoprotein signal peptidase from Leifsonia xyli subsp. xyli (strain CTCB07).